A 466-amino-acid chain; its full sequence is Uronate isomerase (466 aa).

This sequence belongs to the metallo-dependent hydrolases superfamily. Uronate isomerase family.

The enzyme catalyses D-glucuronate = D-fructuronate. It carries out the reaction aldehydo-D-galacturonate = keto-D-tagaturonate. The protein operates within carbohydrate metabolism; pentose and glucuronate interconversion. This Brucella canis (strain ATCC 23365 / NCTC 10854 / RM-666) protein is Uronate isomerase.